The sequence spans 309 residues: RHOMBOID-like protein 5 (309 aa).

A run of 7 helical transmembrane segments spans residues Ile-27–Phe-47, Ile-113–Gly-133, Phe-140–Ser-160, Val-170–Ile-190, Cys-200–Pro-220, Val-222–Leu-242, and Ile-274–Leu-294. Ser-175 (nucleophile) is an active-site residue. His-227 functions as the Charge relay system in the catalytic mechanism.

The protein belongs to the peptidase S54 family.

The protein localises to the membrane. It catalyses the reaction Cleaves type-1 transmembrane domains using a catalytic dyad composed of serine and histidine that are contributed by different transmembrane domains.. Probable rhomboid-type serine protease that catalyzes intramembrane proteolysis. May function in reproductive organs maturation. This chain is RHOMBOID-like protein 5, found in Arabidopsis thaliana (Mouse-ear cress).